Here is a 526-residue protein sequence, read N- to C-terminus: Amine oxidase [flavin-containing] A (526 aa).

At M1 the chain carries N-acetylmethionine. The Cytoplasmic segment spans residues 1–497 (MTDLEKPSIT…HTFLERNLPS (497 aa)). S383 carries the post-translational modification Phosphoserine. Position 406 is an S-8alpha-FAD cysteine (C406). A helical; Anchor for type IV membrane protein transmembrane segment spans residues 498–518 (VPGLLKITGFSTSVALLCFVL). The Mitochondrial intermembrane portion of the chain corresponds to 519-526 (YKFKQPQS). An interaction with membrane phospholipid headgroups region spans residues 520–522 (KFK).

Belongs to the flavin monoamine oxidase family. In terms of assembly, monomer, homo- or heterodimer (containing two subunits of similar size). Each subunit contains a covalently bound flavin. Enzymatically active as monomer. It depends on FAD as a cofactor.

The protein localises to the mitochondrion outer membrane. It catalyses the reaction a secondary aliphatic amine + O2 + H2O = a primary amine + an aldehyde + H2O2. The catalysed reaction is a primary methyl amine + O2 + H2O = an aldehyde + H2O2 + NH4(+). It carries out the reaction serotonin + O2 + H2O = (5-hydroxyindol-3-yl)acetaldehyde + H2O2 + NH4(+). The enzyme catalyses (R)-adrenaline + O2 + H2O = (R)-3,4-dihydroxymandelaldehyde + methylamine + H2O2. It catalyses the reaction dopamine + O2 + H2O = 3,4-dihydroxyphenylacetaldehyde + H2O2 + NH4(+). The catalysed reaction is tyramine + O2 + H2O = (4-hydroxyphenyl)acetaldehyde + H2O2 + NH4(+). It carries out the reaction (R)-noradrenaline + O2 + H2O = (R)-3,4-dihydroxymandelaldehyde + H2O2 + NH4(+). The enzyme catalyses kynuramine + O2 + H2O = 3-(2-aminophenyl)-3-oxopropanal + H2O2 + NH4(+). It catalyses the reaction tryptamine + O2 + H2O = indole-3-acetaldehyde + H2O2 + NH4(+). The catalysed reaction is 2-phenylethylamine + O2 + H2O = 2-phenylacetaldehyde + H2O2 + NH4(+). Catalyzes the oxidative deamination of biogenic and xenobiotic amines and has important functions in the metabolism of neuroactive and vasoactive amines in the central nervous system and peripheral tissues. Preferentially oxidizes serotonin. Also catalyzes the oxidative deamination of kynuramine to 3-(2-aminophenyl)-3-oxopropanal that can spontaneously condense to 4-hydroxyquinoline. The protein is Amine oxidase [flavin-containing] A of Mus musculus (Mouse).